Consider the following 298-residue polypeptide: GTP cyclohydrolase FolE2 (298 aa).

Belongs to the GTP cyclohydrolase IV family.

The enzyme catalyses GTP + H2O = 7,8-dihydroneopterin 3'-triphosphate + formate + H(+). It functions in the pathway cofactor biosynthesis; 7,8-dihydroneopterin triphosphate biosynthesis; 7,8-dihydroneopterin triphosphate from GTP: step 1/1. Converts GTP to 7,8-dihydroneopterin triphosphate. In Xylella fastidiosa (strain 9a5c), this protein is GTP cyclohydrolase FolE2.